The sequence spans 605 residues: Class II receptor tyrosine kinase (605 aa).

The Ig-like C2-type domain occupies 1–67; that stretch reads MWSSPGRNLE…DGESASFRVD (67 aa). Residues 1 to 84 lie on the Extracellular side of the membrane; that stretch reads MWSSPGRNLE…GSNSGVIAGV (84 aa). Residues N26, N44, and N72 are each glycosylated (N-linked (GlcNAc...) asparagine). Residues 85-105 traverse the membrane as a helical segment; it reads LITLLLLIALIIILICVFWVV. The Cytoplasmic portion of the chain corresponds to 106–605; that stretch reads WRYRRRGKFD…GRPRGVAGCV (500 aa). The interval 209–230 is disordered; that stretch reads EELSPIQEKPTRRNTGLSTYSQ. Residues 221–230 show a composition bias toward polar residues; that stretch reads RNTGLSTYSQ. The Protein kinase domain occupies 346–605; sequence IREVKQIGVG…GRPRGVAGCV (260 aa). ATP-binding positions include 352-360 and K393; that span reads IGVGQFGAV. The active-site Proton acceptor is the D496. A Phosphotyrosine; by autocatalysis modification is found at Y527.

The protein belongs to the protein kinase superfamily. Tyr protein kinase family. Insulin receptor subfamily. In terms of processing, phosphorylated.

Its subcellular location is the cell membrane. The enzyme catalyses L-tyrosyl-[protein] + ATP = O-phospho-L-tyrosyl-[protein] + ADP + H(+). This Geodia cydonium (Sponge) protein is Class II receptor tyrosine kinase (TK).